A 493-amino-acid chain; its full sequence is Cytochrome P450 monooxygenase mfmF (493 aa).

Transmembrane regions (helical) follow at residues 3–23 and 301–321; these read SLIP…RLFF and VLFA…FHLV. A heme-binding site is contributed by Cys-440.

It belongs to the cytochrome P450 family. It depends on heme as a cofactor.

It localises to the membrane. The protein operates within secondary metabolite biosynthesis; terpenoid biosynthesis. Cytochrome P450 monooxygenase; part of the gene cluster that mediates the biosynthesis of the phthalide-terpenoid hybrid 11'-O-desmethylfendlerol. Within the pathway, mfmF catalyzes C-3 hydroxylation of 5-hydroxy-4-(hydroxymethyl)-7-methoxy-6-methylphthalide to yield cyclopolic acid. The biosynthesis of 11'-O-desmethylfendlerol begins with the NR-PKS mfmB that forms 3,5-dimethylorsellinic acid (DMOA), which is then transformed into the phthalide 5,7-dihydroxy-4-(hydroxymethyl)-6-methylphthalide by the cytochrome P450 monooxygenase mfmA and the hydrolase mfmC. Subsequently, the methyltransferase mfmE catalyzes 7-O-methylation to yield 5-hydroxy-4-(hydroxymethyl)-7-methoxy-6-methylphthalide, which undergoes C-3 hydroxylation by the cytochrome P450 monooxygenase mfmF. The resultant cyclopolic acid (2,5-dihydroxy-4-(hydroxymethyl)-7-methoxy-6-methylphthalide) is then farnesylated by the DMATS-type prenyltransferase mfmD to afford 5-O-farnesylcyclopolic acid. Finally, the Pyr4-family terpene cyclase mfmH cyclizes the farnesyl moiety of 5-O-farnesylcyclopolic acid into a drimane-like structure, thus completing the biosynthesis of 11'-O-desmethylfendlerol. In Annulohypoxylon moriforme (Filamentous fungus), this protein is Cytochrome P450 monooxygenase mfmF.